Reading from the N-terminus, the 112-residue chain is Outer membrane protein assembly factor BamE (112 aa).

The signal sequence occupies residues 1–19; that stretch reads MRCKTLTAAAAVLLMLTAG. The N-palmitoyl cysteine moiety is linked to residue Cys20. A lipid anchor (S-diacylglycerol cysteine) is attached at Cys20.

Belongs to the BamE family. Part of the Bam complex, which is composed of the outer membrane protein BamA, and four lipoproteins BamB, BamC, BamD and BamE.

It localises to the cell outer membrane. Part of the outer membrane protein assembly complex, which is involved in assembly and insertion of beta-barrel proteins into the outer membrane. This is Outer membrane protein assembly factor BamE from Salmonella typhimurium (strain LT2 / SGSC1412 / ATCC 700720).